Reading from the N-terminus, the 367-residue chain is Apolipoprotein A-V (367 aa).

The N-terminal stretch at 1–20 (MAAVITWALALLSVFATVQA) is a signal peptide. Phosphoserine is present on serine 52. A coiled-coil region spans residues 231-255 (TRKAKDLHTSIQRNLDQLRDELSTF). The segment at 305–332 (EEIQHQLAPPPPSHSAFAPELGHSDSNK) is disordered.

The protein belongs to the apolipoprotein A1/A4/E family. As to quaternary structure, interacts with GPIHBP1. Interacts with SORL1; this interaction leads to APOA5 internalization and sorting either to lysosomes and degradation, or to the trans-Golgi network. Post-translationally, phosphorylated by FAM20C in the extracellular medium. Liver.

The protein localises to the secreted. The protein resides in the early endosome. It is found in the late endosome. It localises to the golgi apparatus. Its subcellular location is the trans-Golgi network. Its function is as follows. Minor apolipoprotein mainly associated with HDL and to a lesser extent with VLDL. May also be associated with chylomicrons. Important determinant of plasma triglyceride (TG) levels by both being a potent stimulator of apo-CII lipoprotein lipase (LPL) TG hydrolysis and an inhibitor of the hepatic VLDL-TG production rate (without affecting the VLDL-apoB production rate). Activates poorly lecithin:cholesterol acyltransferase (LCAT) and does not enhance efflux of cholesterol from macrophages. Binds heparin. This chain is Apolipoprotein A-V (Apoa5), found in Rattus norvegicus (Rat).